Reading from the N-terminus, the 1309-residue chain is Disease resistance protein RPP2A (1309 aa).

Residues 9-173 (RRYDVFPSFS…MVADDVSKKL (165 aa)) enclose the TIR 1 domain. The active site involves glutamate 84. The region spanning 187-418 (EAHLEAMSSI…FKKTLRNYLP (232 aa)) is the NB-ARC 1 domain. Positions 488-585 (PNRRHSNDDW…KECILVFSCH (98 aa)) constitute an ALOG domain. In terms of domain architecture, TIR 2 spans 574 to 737 (REKECILVFS…EVVRNASLRL (164 aa)). Residues 755 to 987 (SQSTDVEIMG…IFLDLACFFR (233 aa)) enclose the NB-ARC 2 domain. A coiled-coil region spans residues 1114 to 1141 (LPHGLDTLPDELSLLHWENYPLVYLPQK). LRR repeat units lie at residues 1145-1167 (VNLV…KKNL), 1168-1195 (EKLK…NLEH), 1214-1237 (CGKL…MVDL), 1238-1258 (TTLK…QDFA), 1259-1283 (PNLE…NLTE), and 1285-1307 (VTLD…EIIR).

It belongs to the disease resistance TIR-NB-LRR family.

It carries out the reaction NAD(+) + H2O = ADP-D-ribose + nicotinamide + H(+). In terms of biological role, disease resistance protein that cooperates with RPP2B to confer resistance to Hyaloperonospora parasitica isolate Cala2. This is Disease resistance protein RPP2A from Arabidopsis thaliana (Mouse-ear cress).